Here is a 397-residue protein sequence, read N- to C-terminus: Mitochondrial inner membrane magnesium transporter LPE10 (397 aa).

A mitochondrion-targeting transit peptide spans 1-37; the sequence is MLLVNRAITLNLVKRCCWRSTMFMTPKRFLGTSEEES. A helical membrane pass occupies residues 316-336; sequence LMLLGIRFSIGMLSLGGPIFI. Positions 340–343 match the YGMN motif; it reads YGMN. The chain crosses the membrane as a helical span at residues 354–374; that stretch reads GFIAASAIGMISLGALYFYSI.

Belongs to the CorA metal ion transporter (MIT) (TC 1.A.35) family. As to quaternary structure, forms homooligomers. Interacts with MRS2.

The protein localises to the mitochondrion inner membrane. Mitochondrial inner membrane magnesium transporter required for mitochondrial magnesium homeostasis. Modulates the conductance of the MRS2 channel. Involved in the splicing of mRNA group II introns in mitochondria by affecting mitochondrial magnesium concentrations, which are critical for group II intron splicing. In Candida glabrata (strain ATCC 2001 / BCRC 20586 / JCM 3761 / NBRC 0622 / NRRL Y-65 / CBS 138) (Yeast), this protein is Mitochondrial inner membrane magnesium transporter LPE10 (LPE10).